The chain runs to 250 residues: UPF0246 protein cce_3295 (250 aa).

The protein belongs to the UPF0246 family.

The polypeptide is UPF0246 protein cce_3295 (Crocosphaera subtropica (strain ATCC 51142 / BH68) (Cyanothece sp. (strain ATCC 51142))).